The following is a 192-amino-acid chain: Thymidine kinase (192 aa).

ATP is bound by residues serine 9–threonine 16 and aspartate 88–histidine 91. Residue glutamate 89 is the Proton acceptor of the active site. Zn(2+)-binding residues include cysteine 146, cysteine 148, cysteine 183, and histidine 186.

The protein belongs to the thymidine kinase family. In terms of assembly, homotetramer.

The protein localises to the cytoplasm. It catalyses the reaction thymidine + ATP = dTMP + ADP + H(+). In Blochmanniella floridana, this protein is Thymidine kinase.